Reading from the N-terminus, the 86-residue chain is Exodeoxyribonuclease 7 small subunit (86 aa).

Belongs to the XseB family. As to quaternary structure, heterooligomer composed of large and small subunits.

The protein localises to the cytoplasm. The enzyme catalyses Exonucleolytic cleavage in either 5'- to 3'- or 3'- to 5'-direction to yield nucleoside 5'-phosphates.. Functionally, bidirectionally degrades single-stranded DNA into large acid-insoluble oligonucleotides, which are then degraded further into small acid-soluble oligonucleotides. The chain is Exodeoxyribonuclease 7 small subunit from Xanthomonas axonopodis pv. citri (strain 306).